We begin with the raw amino-acid sequence, 176 residues long: dCTP deaminase (176 aa).

Residues 99–104 (RSTLAR) and aspartate 115 contribute to the dCTP site. The active-site Proton donor/acceptor is glutamate 125. Glutamine 163 is a binding site for dCTP.

It belongs to the dCTP deaminase family. In terms of assembly, homotrimer.

The catalysed reaction is dCTP + H2O + H(+) = dUTP + NH4(+). Its pathway is pyrimidine metabolism; dUMP biosynthesis; dUMP from dCTP (dUTP route): step 1/2. Functionally, catalyzes the deamination of dCTP to dUTP. This is dCTP deaminase from Pyrobaculum islandicum (strain DSM 4184 / JCM 9189 / GEO3).